The chain runs to 1070 residues: Phosphatidylinositol 4,5-bisphosphate 3-kinase catalytic subunit beta isoform (1070 aa).

A PI3K-ABD domain is found at 26–115 (SDGSISVDFL…LPVLKLVTRS (90 aa)). One can recognise a PI3K-RBD domain in the interval 194–285 (GGKLVVAVHF…RTLPHFILVE (92 aa)). Position 324 is a phosphoserine (S324). Residues 327-496 (WGNNNPFQIV…NATALHIKFP (170 aa)) enclose the C2 PI3K-type domain. The Nuclear localization signal (NLS) motif lies at 410–418 (KVKTKKSTK). Residues 524 to 701 (ANVSSRGGKK…GVILEAYCRG (178 aa)) enclose the PIK helical domain. The 282-residue stretch at 772–1053 (YVEKCRYMDS…KFDEALRESW (282 aa)) folds into the PI3K/PI4K catalytic domain. The segment at 778–784 (YMDSKMK) is G-loop. Residues 916 to 924 (GIGDRHSDN) form a catalytic loop region. An activation loop region spans residues 935–961 (HIDFGHILGNFKSKFGIKRERVPFILT). Position 1070 is a phosphoserine; by autocatalysis (S1070).

It belongs to the PI3/PI4-kinase family. As to quaternary structure, heterodimer of a catalytic subunit PIK3CB and a p85 regulatory subunit (PIK3R1, PIK3R2 or PIK3R3). Interaction with PIK3R2 is required for nuclear localization and nuclear export. Part of a complex with PIK3R1 and PTEN. Binding to PTEN may antagonize the lipid kinase activity under normal growth conditions. Part of a complex involved in autophagosome formation composed of PIK3C3 and PIK3R4. Interacts with BECN1, ATG14 and RAB5A. Autophosphorylation at Ser-1070 negatively regulates the phosphatidylinositol-4,5-bisphosphate 3-kinase activity.

Its subcellular location is the cytoplasm. The protein resides in the nucleus. The enzyme catalyses a 1,2-diacyl-sn-glycero-3-phospho-(1D-myo-inositol-4,5-bisphosphate) + ATP = a 1,2-diacyl-sn-glycero-3-phospho-(1D-myo-inositol-3,4,5-trisphosphate) + ADP + H(+). It catalyses the reaction 1-octadecanoyl-2-(5Z,8Z,11Z,14Z)-eicosatetraenoyl-sn-glycero-3-phospho-1D-myo-inositol 4,5-bisphosphate + ATP = 1-octadecanoyl-2-(5Z,8Z,11Z,14Z-eicosatetraenoyl)-sn-glycero-3-phospho-(1D-myo-inositol 3,4,5-triphosphate) + ADP + H(+). The catalysed reaction is L-seryl-[protein] + ATP = O-phospho-L-seryl-[protein] + ADP + H(+). It participates in phospholipid metabolism; phosphatidylinositol phosphate biosynthesis. In terms of biological role, phosphoinositide-3-kinase (PI3K) phosphorylates phosphatidylinositol (PI) derivatives at position 3 of the inositol ring to produce 3-phosphoinositides. Uses ATP and PtdIns(4,5)P2 (phosphatidylinositol 4,5-bisphosphate) to generate phosphatidylinositol 3,4,5-trisphosphate (PIP3). PIP3 plays a key role by recruiting PH domain-containing proteins to the membrane, including AKT1 and PDPK1, activating signaling cascades involved in cell growth, survival, proliferation, motility and morphology. Involved in the activation of AKT1 upon stimulation by G-protein coupled receptors (GPCRs) ligands such as CXCL12, sphingosine 1-phosphate, and lysophosphatidic acid. May also act downstream receptor tyrosine kinases. Required in different signaling pathways for stable platelet adhesion and aggregation. Plays a role in platelet activation signaling triggered by GPCRs, alpha-IIb/beta-3 integrins (ITGA2B/ ITGB3) and ITAM (immunoreceptor tyrosine-based activation motif)-bearing receptors such as GP6. Regulates the strength of adhesion of ITGA2B/ ITGB3 activated receptors necessary for the cellular transmission of contractile forces. Required for platelet aggregation induced by F2 (thrombin) and thromboxane A2 (TXA2). Has a role in cell survival. May have a role in cell migration. Involved in the early stage of autophagosome formation. Modulates the intracellular level of PtdIns3P (phosphatidylinositol 3-phosphate) and activates PIK3C3 kinase activity. May act as a scaffold, independently of its lipid kinase activity to positively regulate autophagy. May have a role in insulin signaling as scaffolding protein in which the lipid kinase activity is not required. May have a kinase-independent function in regulating cell proliferation and in clathrin-mediated endocytosis. Mediator of oncogenic signal in cell lines lacking PTEN. The lipid kinase activity is necessary for its role in oncogenic transformation. Required for the growth of ERBB2 and RAS driven tumors. Also has a protein kinase activity showing autophosphorylation. In Rattus norvegicus (Rat), this protein is Phosphatidylinositol 4,5-bisphosphate 3-kinase catalytic subunit beta isoform (Pik3cb).